The chain runs to 30 residues: Dermonecrotic toxin LlSicTox-alphaIII-1 (30 aa).

The active site involves H12.

It belongs to the arthropod phospholipase D family. Class I subfamily. It depends on Mg(2+) as a cofactor. Contains 1 disulfide bond. As to expression, expressed by the venom gland.

The protein localises to the secreted. The enzyme catalyses an N-(acyl)-sphingosylphosphocholine = an N-(acyl)-sphingosyl-1,3-cyclic phosphate + choline. It carries out the reaction an N-(acyl)-sphingosylphosphoethanolamine = an N-(acyl)-sphingosyl-1,3-cyclic phosphate + ethanolamine. The catalysed reaction is a 1-acyl-sn-glycero-3-phosphocholine = a 1-acyl-sn-glycero-2,3-cyclic phosphate + choline. It catalyses the reaction a 1-acyl-sn-glycero-3-phosphoethanolamine = a 1-acyl-sn-glycero-2,3-cyclic phosphate + ethanolamine. Dermonecrotic toxins cleave the phosphodiester linkage between the phosphate and headgroup of certain phospholipids (sphingolipid and lysolipid substrates), forming an alcohol (often choline) and a cyclic phosphate. This toxin acts on sphingomyelin (SM). It may also act on ceramide phosphoethanolamine (CPE), lysophosphatidylcholine (LPC) and lysophosphatidylethanolamine (LPE), but not on lysophosphatidylserine (LPS), and lysophosphatidylglycerol (LPG). It acts by transphosphatidylation, releasing exclusively cyclic phosphate products as second products. In vivo, intradermal injection induces dermonecrosis. Induces hemolysis, increased vascular permeability, edema, inflammatory response, and platelet aggregation. The sequence is that of Dermonecrotic toxin LlSicTox-alphaIII-1 from Loxosceles laeta (South American recluse spider).